We begin with the raw amino-acid sequence, 695 residues long: Centrosomal protein of 89 kDa (695 aa).

Disordered stretches follow at residues 24–54, 66–147, and 167–272; these read LIPA…RPRS, TGRT…GDED, and AVPL…SEVL. Residues 34–49 are compositionally biased toward pro residues; the sequence is PAVPRTPPPRSPNPSP. Composition is skewed to acidic residues over residues 124–146 and 178–189; these read DEDD…EGDE and DSDVDEETEDSA. A compositionally biased stretch (polar residues) spans 209 to 226; it reads GQTQPSSLPQPRSVSRRS. Basic and acidic residues predominate over residues 251 to 271; sequence TNKESPVRVNERDRSSEDSEV. 2 coiled-coil regions span residues 276–368 and 406–632; these read LEVQ…RYQA and AYED…LEKE.

The protein resides in the cytoplasm. It localises to the cytosol. Its subcellular location is the cytoskeleton. It is found in the microtubule organizing center. The protein localises to the centrosome. The protein resides in the spindle pole. It localises to the centriole. Its subcellular location is the mitochondrion intermembrane space. In terms of biological role, required for ciliogenesis. Also plays a role in mitochondrial metabolism where it may modulate complex IV activity. This chain is Centrosomal protein of 89 kDa (cep89), found in Danio rerio (Zebrafish).